Here is a 402-residue protein sequence, read N- to C-terminus: 1-deoxy-D-xylulose 5-phosphate reductoisomerase (402 aa).

Positions 27, 28, 29, 30, 53, 54, 55, and 140 each coordinate NADPH. K141 contributes to the 1-deoxy-D-xylulose 5-phosphate binding site. E142 lines the NADPH pocket. D166 lines the Mn(2+) pocket. S167, E168, S192, and H215 together coordinate 1-deoxy-D-xylulose 5-phosphate. E168 contacts Mn(2+). G221 contacts NADPH. The 1-deoxy-D-xylulose 5-phosphate site is built by S228, N233, K234, and E237. E237 serves as a coordination point for Mn(2+).

This sequence belongs to the DXR family. Mg(2+) is required as a cofactor. It depends on Mn(2+) as a cofactor.

The enzyme catalyses 2-C-methyl-D-erythritol 4-phosphate + NADP(+) = 1-deoxy-D-xylulose 5-phosphate + NADPH + H(+). It participates in isoprenoid biosynthesis; isopentenyl diphosphate biosynthesis via DXP pathway; isopentenyl diphosphate from 1-deoxy-D-xylulose 5-phosphate: step 1/6. In terms of biological role, catalyzes the NADPH-dependent rearrangement and reduction of 1-deoxy-D-xylulose-5-phosphate (DXP) to 2-C-methyl-D-erythritol 4-phosphate (MEP). The sequence is that of 1-deoxy-D-xylulose 5-phosphate reductoisomerase from Lawsonia intracellularis (strain PHE/MN1-00).